Consider the following 1154-residue polypeptide: uncharacterized protein (1154 aa).

The signal sequence occupies residues methionine 1–serine 18. Cysteine 19 carries N-palmitoyl cysteine lipidation. Residue cysteine 19 is the site of S-diacylglycerol cysteine attachment. A run of 4 helical transmembrane segments spans residues isoleucine 288–glycine 308, leucine 394–phenylalanine 414, alanine 423–phenylalanine 443, and isoleucine 458–isoleucine 478.

It belongs to the TrbL/VirB6 family.

It localises to the cell membrane. This is an uncharacterized protein from Rickettsia typhi (strain ATCC VR-144 / Wilmington).